The sequence spans 265 residues: MANQKQMRTQILITDIPSGKFTSKWPTQLEKTLFKEQFPNLQSHLQYYTPLPFLNRIIIIFDNEDDTLQVFKFLQELLAKENSGPMKLFVTESLLNNQHPRSRSTDDAVSLQDNNLALLEDHRNKPLLSINTDPGVTGVDSSSLNKGGSSLSPDKSSLESPTMLKLSTDSKPFSYQEPLPKLSRSSSSTSNLSLNRSSQTSLPSQLENKDKSASGTKCLFASKPLGLTIDTSTRSNAASCTENDVNATASNPPKSPSITVNEFFH.

Ser-104 and Ser-110 each carry phosphoserine. 2 disordered regions span residues 127–213 and 242–265; these read LLSI…DKSA and ENDVNATASNPPKSPSITVNEFFH. Thr-132 carries the phosphothreonine modification. 2 stretches are compositionally biased toward low complexity: residues 141 to 161 and 182 to 202; these read SSSLNKGGSSLSPDKSSLESP and LSRSSSSTSNLSLNRSSQTSL. Phosphoserine is present on residues Ser-152, Ser-157, Ser-160, Ser-183, Ser-187, Ser-193, Ser-201, and Ser-255.

In terms of processing, phosphorylation of Ser-152 and Ser-160 is induced 2-fold in response to mating pheromone.

The protein localises to the cytoplasm. This Saccharomyces cerevisiae (strain ATCC 204508 / S288c) (Baker's yeast) protein is Regulator of calcineurin 2 (RCN2).